The following is a 150-amino-acid chain: D-aminoacyl-tRNA deacylase (150 aa).

Residues 138-139 (GP) carry the Gly-cisPro motif, important for rejection of L-amino acids motif.

Belongs to the DTD family. Homodimer.

The protein resides in the cytoplasm. It catalyses the reaction glycyl-tRNA(Ala) + H2O = tRNA(Ala) + glycine + H(+). The enzyme catalyses a D-aminoacyl-tRNA + H2O = a tRNA + a D-alpha-amino acid + H(+). In terms of biological role, an aminoacyl-tRNA editing enzyme that deacylates mischarged D-aminoacyl-tRNAs. Also deacylates mischarged glycyl-tRNA(Ala), protecting cells against glycine mischarging by AlaRS. Acts via tRNA-based rather than protein-based catalysis; rejects L-amino acids rather than detecting D-amino acids in the active site. By recycling D-aminoacyl-tRNA to D-amino acids and free tRNA molecules, this enzyme counteracts the toxicity associated with the formation of D-aminoacyl-tRNA entities in vivo and helps enforce protein L-homochirality. This chain is D-aminoacyl-tRNA deacylase, found in Porphyromonas gingivalis (strain ATCC 33277 / DSM 20709 / CIP 103683 / JCM 12257 / NCTC 11834 / 2561).